The following is a 146-amino-acid chain: Ribonuclease H (146 aa).

In terms of domain architecture, RNase H type-1 spans 1 to 143 (MKKRVTIYTD…CDELARQAIK (143 aa)). Mg(2+) is bound by residues Asp-10, Glu-48, Asp-70, and Asp-135.

This sequence belongs to the RNase H family. In terms of assembly, monomer. Mg(2+) serves as cofactor.

It localises to the cytoplasm. The catalysed reaction is Endonucleolytic cleavage to 5'-phosphomonoester.. Its function is as follows. Endonuclease that specifically degrades the RNA of RNA-DNA hybrids. The polypeptide is Ribonuclease H (Chlorobium limicola (strain DSM 245 / NBRC 103803 / 6330)).